The chain runs to 295 residues: MSTKVKKTTQLKQMLNSKDLEFIMEAHNGLSARIVQEAGFKGIWGSGLSVSAQLGVRDSNEASWTQVVEVLEFMSDASDVPILLDADTGYGNFNNARRLVRKLEDRGVAGACLEDKLFPKTNSLHDGRAQPLADIEEFALKIKACKDSQTDPDFCIVARVEAFIAGWGLDEALKRAEAYRNAGADAILMHSKKADPSDIEAFMKAWNNQGPVVIVPTKYYKTPTDHFRDMGVSMVIWANHNLRASVSAIQQTTKQIYDDQSLVNVEDKIVSVKEIFRLQRDDELVQAEDKYLPKN.

Asp-58 serves as the catalytic Nucleophile. Asp-58 contributes to the Mg(2+) binding site.

It belongs to the isocitrate lyase/PEP mutase superfamily. PEP mutase family. As to quaternary structure, homotetramer. It depends on Mg(2+) as a cofactor.

The catalysed reaction is phosphoenolpyruvate + H(+) = 3-phosphonopyruvate. It functions in the pathway phosphorus metabolism; phosphonate biosynthesis. In terms of biological role, formation of a carbon-phosphorus bond by converting phosphoenolpyruvate (PEP) to phosphonopyruvate (P-Pyr). The sequence is that of Phosphoenolpyruvate phosphomutase from Mytilus edulis (Blue mussel).